The following is a 155-amino-acid chain: Ribosomal RNA large subunit methyltransferase H (155 aa).

S-adenosyl-L-methionine is bound by residues L72, G103, and 122–127 (LSALTL).

Belongs to the RNA methyltransferase RlmH family. In terms of assembly, homodimer.

It is found in the cytoplasm. It carries out the reaction pseudouridine(1915) in 23S rRNA + S-adenosyl-L-methionine = N(3)-methylpseudouridine(1915) in 23S rRNA + S-adenosyl-L-homocysteine + H(+). In terms of biological role, specifically methylates the pseudouridine at position 1915 (m3Psi1915) in 23S rRNA. The chain is Ribosomal RNA large subunit methyltransferase H from Salmonella dublin (strain CT_02021853).